Consider the following 69-residue polypeptide: DNA gyrase inhibitor YacG (69 aa).

Cysteine 13, cysteine 16, cysteine 32, and cysteine 36 together coordinate Zn(2+).

It belongs to the DNA gyrase inhibitor YacG family. As to quaternary structure, interacts with GyrB. Requires Zn(2+) as cofactor.

Its function is as follows. Inhibits all the catalytic activities of DNA gyrase by preventing its interaction with DNA. Acts by binding directly to the C-terminal domain of GyrB, which probably disrupts DNA binding by the gyrase. The polypeptide is DNA gyrase inhibitor YacG (Neisseria meningitidis serogroup A / serotype 4A (strain DSM 15465 / Z2491)).